The sequence spans 276 residues: Large ribosomal subunit protein uL2cy (276 aa).

Disordered regions lie at residues 1–25 (MAIH…VKSN) and 225–276 (MNPV…RRSK). A compositionally biased stretch (polar residues) spans 7–25 (KTSTPSTRNGTVDSQVKSN).

This sequence belongs to the universal ribosomal protein uL2 family. In terms of assembly, part of the 50S ribosomal subunit.

It localises to the plastid. The protein localises to the chloroplast. This Coffea arabica (Arabian coffee) protein is Large ribosomal subunit protein uL2cy (rpl2-B).